The sequence spans 25 residues: Caerin-1.19 (25 aa).

L25 bears the Leucine amide mark.

It belongs to the frog skin active peptide (FSAP) family. Caerin subfamily. Expressed by the skin dorsal glands.

The protein resides in the secreted. In terms of biological role, caerin-1.19 shows significant activity against Gram-positive organisms, but is less effective against Gram-negative organisms. This Ranoidea gracilenta (Dainty green tree frog) protein is Caerin-1.19.